We begin with the raw amino-acid sequence, 400 residues long: Deoxyguanosinetriphosphate triphosphohydrolase-like protein (400 aa).

Positions arginine 73–asparagine 215 constitute an HD domain.

This sequence belongs to the dGTPase family. Type 2 subfamily.

The protein is Deoxyguanosinetriphosphate triphosphohydrolase-like protein of Bartonella henselae (strain ATCC 49882 / DSM 28221 / CCUG 30454 / Houston 1) (Rochalimaea henselae).